The following is a 319-amino-acid chain: Acetyl esterase (319 aa).

Residues 91-93 (HGG) carry the Involved in the stabilization of the negatively charged intermediate by the formation of the oxyanion hole motif. Residues Ser-165, Asp-262, and His-292 contribute to the active site.

The protein belongs to the 'GDXG' lipolytic enzyme family. As to quaternary structure, homodimer. Interacts with MalT and MelA.

The protein resides in the cytoplasm. Functionally, displays esterase activity towards short chain fatty esters (acyl chain length of up to 8 carbons). Able to hydrolyze triacetylglycerol (triacetin) and tributyrylglycerol (tributyrin), but not trioleylglycerol (triolein) or cholesterol oleate. Negatively regulates MalT activity by antagonizing maltotriose binding. Inhibits MelA galactosidase activity. In Escherichia coli O17:K52:H18 (strain UMN026 / ExPEC), this protein is Acetyl esterase.